Reading from the N-terminus, the 704-residue chain is Polyribonucleotide nucleotidyltransferase (704 aa).

Mg(2+) is bound by residues aspartate 488 and aspartate 494. Residues 555–614 enclose the KH domain; sequence PRITTIKINPEKIRDVIGKGGATIRALTEETGTTIELDDDGTVKIASSNGEATKEAIRRI. Residues 624-692 form the S1 motif domain; that stretch reads GTVYNGKVVR…RQGRVRLSMK (69 aa).

Belongs to the polyribonucleotide nucleotidyltransferase family. As to quaternary structure, component of the RNA degradosome, which is a multiprotein complex involved in RNA processing and mRNA degradation. Requires Mg(2+) as cofactor.

It localises to the cytoplasm. The enzyme catalyses RNA(n+1) + phosphate = RNA(n) + a ribonucleoside 5'-diphosphate. In terms of biological role, involved in mRNA degradation. Catalyzes the phosphorolysis of single-stranded polyribonucleotides processively in the 3'- to 5'-direction. The polypeptide is Polyribonucleotide nucleotidyltransferase (Shewanella halifaxensis (strain HAW-EB4)).